Consider the following 182-residue polypeptide: Translation initiation factor IF-3 (182 aa).

Residues 1 to 22 (MPLGDCNISTPDNKQNRKNQEI) are disordered.

Belongs to the IF-3 family. In terms of assembly, monomer.

It is found in the cytoplasm. Functionally, IF-3 binds to the 30S ribosomal subunit and shifts the equilibrium between 70S ribosomes and their 50S and 30S subunits in favor of the free subunits, thus enhancing the availability of 30S subunits on which protein synthesis initiation begins. In Xanthomonas campestris pv. campestris (strain ATCC 33913 / DSM 3586 / NCPPB 528 / LMG 568 / P 25), this protein is Translation initiation factor IF-3.